The sequence spans 202 residues: MDVSKKISVIKKEIINEALDKKEQIISREKDKWEKEYEDFKQKLDNKEKEIIELYRQEARMKKEQIVSRAVLKKKTEKRQKMDEYLHQILKELEEKLHEYRNDTGYRDFLKRLVKDSLNVMESSHVIIKLNSHDLKIFNEIQDELRNEIDNIEIEVANNPLNISGGVIVEDRDGKEIVENTFETCLEEVKEDIAVELHSKVL.

It belongs to the V-ATPase E subunit family.

Functionally, produces ATP from ADP in the presence of a proton gradient across the membrane. This is V-type proton ATPase subunit E from Halothermothrix orenii (strain H 168 / OCM 544 / DSM 9562).